Here is a 381-residue protein sequence, read N- to C-terminus: Genome polyprotein (381 aa).

The segment at alanine 115–threonine 155 is disordered.

The protein belongs to the potyviridae genome polyprotein family. Post-translationally, genome polyprotein of potyviruses undergoes post-translational proteolytic processing by the main proteinase NIa-pro resulting in the production of at least ten individual proteins. The P1 proteinase and the HC-pro cleave only their respective C-termini autocatalytically. 6K1 is essential for proper proteolytic separation of P3 from CI.

It localises to the virion. It carries out the reaction RNA(n) + a ribonucleoside 5'-triphosphate = RNA(n+1) + diphosphate. Its function is as follows. An RNA-dependent RNA polymerase that plays an essential role in the virus replication. Involved in aphid transmission, cell-to-cell and systemis movement, encapsidation of the viral RNA and in the regulation of viral RNA amplification. This Capsicum annuum (Capsicum pepper) protein is Genome polyprotein.